A 412-amino-acid polypeptide reads, in one-letter code: Putative competence-damage inducible protein (412 aa).

It belongs to the CinA family.

This chain is Putative competence-damage inducible protein, found in Bacillus cereus (strain G9842).